The primary structure comprises 89 residues: uncharacterized protein (89 aa).

The N-terminal stretch at 1–27 (MKKAAAVLLSLGLVFGFSYGAGHVAEA) is a signal peptide.

This is an uncharacterized protein from Bacillus subtilis (strain 168).